The sequence spans 428 residues: Putative zinc metalloprotease LL2128 (428 aa).

A Zn(2+)-binding site is contributed by His19. Glu20 is a catalytic residue. His23 provides a ligand contact to Zn(2+). 3 helical membrane-spanning segments follow: residues 188–210 (GPLNNFILGIIAFIVLTFVQGGV), 354–376 (IVYLLAMLSINLGIVNLFPIPVL), and 401–423 (IITMVGVVFMLVLFVAVTWNDIL). Positions 188–282 (GPLNNFILGI…SETLSVTPKK (95 aa)) constitute a PDZ domain.

It belongs to the peptidase M50B family. The cofactor is Zn(2+).

It is found in the cell membrane. The polypeptide is Putative zinc metalloprotease LL2128 (Lactococcus lactis subsp. lactis (strain IL1403) (Streptococcus lactis)).